The sequence spans 177 residues: Large ribosomal subunit protein uL30 (177 aa).

Belongs to the universal ribosomal protein uL30 family. In terms of assembly, part of the 50S ribosomal subunit.

This chain is Large ribosomal subunit protein uL30, found in Pyrobaculum islandicum (strain DSM 4184 / JCM 9189 / GEO3).